A 571-amino-acid polypeptide reads, in one-letter code: GABA-specific permease (571 aa).

Over M1–Q73 the chain is Cytoplasmic. A helical transmembrane segment spans residues F74–A94. The Vacuolar portion of the chain corresponds to S95–P105. Residues A106–M126 traverse the membrane as a helical segment. Residues A127–E153 lie on the Cytoplasmic side of the membrane. A helical membrane pass occupies residues I154–I174. Topologically, residues D175–S198 are vacuolar. A helical membrane pass occupies residues G199–A219. The Cytoplasmic portion of the chain corresponds to S220 to T228. Residues L229 to T249 traverse the membrane as a helical segment. At K250–D271 the chain is on the vacuolar side. The helical transmembrane segment at W272–S292 threads the bilayer. At F293–I312 the chain is on the cytoplasmic side. The chain crosses the membrane as a helical span at residues G313–M333. Residues A334–W364 lie on the Vacuolar side of the membrane. A helical membrane pass occupies residues A365–T385. The Cytoplasmic portion of the chain corresponds to A386–P416. Residues F417–D437 form a helical membrane-spanning segment. Residues D438–T441 are Vacuolar-facing. The chain crosses the membrane as a helical span at residues D442–F462. Topologically, residues R463–W482 are cytoplasmic. A helical membrane pass occupies residues S483–F503. The Vacuolar segment spans residues P504 to T514. The chain crosses the membrane as a helical span at residues M515–V535. Over Y536 to P571 the chain is Cytoplasmic.

Belongs to the amino acid-polyamine-organocation (APC) superfamily. Amino acid/choline transporter (ACT) (TC 2.A.3.4) family.

The protein resides in the vacuole membrane. Its function is as follows. Required for high-affinity, high-specificity GABA transport. Also transports putrescine. In Saccharomyces cerevisiae (strain ATCC 204508 / S288c) (Baker's yeast), this protein is GABA-specific permease (UGA4).